Here is a 68-residue protein sequence, read N- to C-terminus: Large ribosomal subunit protein uL29 (68 aa).

It belongs to the universal ribosomal protein uL29 family.

The chain is Large ribosomal subunit protein uL29 from Wigglesworthia glossinidia brevipalpis.